A 183-amino-acid polypeptide reads, in one-letter code: Nodulation protein L (183 aa).

Belongs to the transferase hexapeptide repeat family.

Acetyltransferase implicated in the O-acetylation of Nod factors. This Rhizobium meliloti (strain 1021) (Ensifer meliloti) protein is Nodulation protein L (nodL).